Here is a 410-residue protein sequence, read N- to C-terminus: Metacaspase-1 (410 aa).

Residues 1-94 form a disordered region; the sequence is MFPGSGRQTY…RQSGAMNDVS (94 aa). Low complexity-rich tracts occupy residues 21 to 47 and 55 to 64; these read APQY…YNGP and NYNYGHYGPP. Gly residues predominate over residues 65–75; that stretch reads QGQGQGYGQGG. Polar residues predominate over residues 80-94; that stretch reads MYNNNRQSGAMNDVS. Active-site residues include H200 and C256.

Belongs to the peptidase C14B family.

In terms of biological role, involved in cell death (apoptosis). The chain is Metacaspase-1 (MCA1) from Meyerozyma guilliermondii (strain ATCC 6260 / CBS 566 / DSM 6381 / JCM 1539 / NBRC 10279 / NRRL Y-324) (Yeast).